The sequence spans 349 residues: S-adenosylmethionine:tRNA ribosyltransferase-isomerase (349 aa).

This sequence belongs to the QueA family. Monomer.

The protein localises to the cytoplasm. The catalysed reaction is 7-aminomethyl-7-carbaguanosine(34) in tRNA + S-adenosyl-L-methionine = epoxyqueuosine(34) in tRNA + adenine + L-methionine + 2 H(+). It functions in the pathway tRNA modification; tRNA-queuosine biosynthesis. Transfers and isomerizes the ribose moiety from AdoMet to the 7-aminomethyl group of 7-deazaguanine (preQ1-tRNA) to give epoxyqueuosine (oQ-tRNA). This is S-adenosylmethionine:tRNA ribosyltransferase-isomerase from Parabacteroides distasonis (strain ATCC 8503 / DSM 20701 / CIP 104284 / JCM 5825 / NCTC 11152).